Consider the following 367-residue polypeptide: THO complex subunit 6 (367 aa).

7 WD repeats span residues 23–67, 88–129, 157–196, 199–240, 243–283, 285–322, and 324–363; these read IETR…SQSA, AHEG…ESDV, SPMP…IKMT, GHSD…KVIG, DKKS…CVQT, PIPA…LSQI, and CAPC…CTFR.

This sequence belongs to the WD repeat THOC6 family. As to quaternary structure, component of the THO complex, which is composed of THO1, THO2, THO3, THO5, THO6 and THO7. Interacts with ABI5, DDB1A and DWA2.

The protein resides in the nucleus. The protein operates within protein modification; protein ubiquitination. Acts as a component of the THO subcomplex of the TREX complex which is thought to couple mRNA transcription, processing and nuclear export. In terms of biological role, component of the CUL4-RBX1-DDB1-DWA1/DWA2 E3 ubiquitin-protein ligase complex that acts as a negative regulator in abscisic acid (ABA) signaling. May function as the substrate recognition module within this complex leading to ABI5 degradation. Functionally redundant with DWA2. The polypeptide is THO complex subunit 6 (THO6) (Arabidopsis thaliana (Mouse-ear cress)).